The primary structure comprises 68 residues: Protein SlyX homolog (68 aa).

This sequence belongs to the SlyX family.

This chain is Protein SlyX homolog, found in Pseudomonas fluorescens (strain Pf0-1).